Here is a 1141-residue protein sequence, read N- to C-terminus: LRR receptor-like serine/threonine-protein kinase RGI1 (1141 aa).

Positions 1 to 33 are cleaved as a signal peptide; it reads MSLHSLIFFSSSSSSLLFSFFFIFIFCFSLSDA. At 34–726 the chain is on the extracellular side; that stretch reads EQNPEASILY…DASRTRKLRL (693 aa). A disulfide bridge connects residues cysteine 69 and cysteine 77. Asparagine 71 is a glycosylation site (N-linked (GlcNAc...) asparagine). 25 LRR repeats span residues 80–104, 105–128, 130–152, 153–176, 178–200, 202–225, 226–249, 250–273, 275–297, 298–321, 322–345, 347–369, 370–392, 394–417, 418–441, 443–464, 465–489, 490–513, 514–537, 538–561, 563–585, 586–609, 610–634, 636–657, and 658–682; these read QGFITDIDIESVPLQLSLPKNLPAF, RSLQKLTISGANLTGTLPESLGDC, GLKVLDLSSNGLVGDIPWSLSKL, RNLETLILNSNQLTGKIPPDISKC, KLKSLILFDNLLTGSIPTELGKL, GLEVIRIGGNKEISGQIPSEIGDC, SNLTVLGLAETSVSGNLPSSLGKL, KKLETLSIYTTMISGEIPSDLGNC, ELVDLFLYENSLSGSIPREIGQL, TKLEQLFLWQNSLVGGIPEEIGNC, SNLKMIDLSLNLLSGSIPSSIGRL, FLEEFMISDNKFSGSIPTTISNC, SSLVQLQLDKNQISGLIPSELGT, TKLTLFFAWSNQLEGSIPPGLADC, TDLQALDLSRNSLTGTIPSGLFML, NLTKLLLISNSLSGFIPQEIGN, CSSLVRLRLGFNRITGEIPSGIGSL, KKINFLDFSSNRLHGKVPDEIGSC, SELQMIDLSNNSLEGSLPNPVSSL, SGLQVLDVSANQFSGKIPASLGRL, SLNKLILSKNLFSGSIPTSLGMC, SGLQLLDLGSNELSGEIPSELGDI, ENLEIALNLSSNRLTGKIPSKIASL, KLSILDLSHNMLEGDLAPLANI, and ENLVSLNISYNSFSGYLPDNKLFRQ. Asparagine 116 is a glycosylation site (N-linked (GlcNAc...) asparagine). 2 consecutive short sequence motifs (small peptide recognition) follow at residues 185-186 and 207-210; these read FD and RIGG. Asparagine 227 is a glycosylation site (N-linked (GlcNAc...) asparagine). 2 short sequence motifs (small peptide recognition) span residues 230–235 and tyrosine 258; that span reads VLGLAE. Residue asparagine 272 is glycosylated (N-linked (GlcNAc...) asparagine). The Small peptide recognition signature appears at 280–282; that stretch reads FLY. N-linked (GlcNAc...) asparagine glycosylation occurs at asparagine 320. Short sequence motifs (small peptide recognition) lie at residues 328-331 and 350-352; these read DLSL and EFM. A glycan (N-linked (GlcNAc...) asparagine) is linked at asparagine 368. Short sequence motifs (small peptide recognition) lie at residues 398 to 402 and 424 to 427; these read LFFAW and DLSR. An N-linked (GlcNAc...) asparagine glycan is attached at asparagine 443. The short motif at 446–450 is the Small peptide recognition element; the sequence is KLLLI. N-linked (GlcNAc...) asparagine glycosylation is present at asparagine 464. The Small peptide recognition signature appears at 470–472; the sequence is RLR. The N-linked (GlcNAc...) asparagine glycan is linked to asparagine 523. A glycan (N-linked (GlcNAc...) asparagine) is linked at asparagine 617. Asparagine 664 carries N-linked (GlcNAc...) asparagine glycosylation. The helical transmembrane segment at 727 to 747 threads the bilayer; it reads TLALLITLTVVLMILGAVAVI. Topologically, residues 748 to 1141 are cytoplasmic; that stretch reads RARRNIDNER…LLYSSSSSIE (394 aa). Residues 786-1074 form the Protein kinase domain; the sequence is LVEPNVIGKG…EIKQEREEYA (289 aa). Residues 792 to 800 and lysine 814 each bind ATP; that span reads IGKGCSGVV. A phosphotyrosine mark is found at tyrosine 868 and tyrosine 906. Aspartate 919 (proton acceptor) is an active-site residue. Phosphotyrosine occurs at positions 962 and 969.

The protein belongs to the protein kinase superfamily. Ser/Thr protein kinase family. In terms of assembly, interacts with beet curly top virus AL4/C4. Binds to RGF peptides such as RGF1, GLV5/CLEL1/RGF2, GLV7/CLEL3/RGF3, GLV3/RGF4, GLV10/CLEL7/RGF5 and RGF10/CLELN; these interactions trigger the formation of heterodimers with SERK1, SERK2 or BAK1/SERK3 via LRR regions. Interacts with UBP13. In terms of processing, phosphorylated and ubiquitinated upon interaction with RGF1, thus leading to activation a subsequent degradation. Stabilized by UBP12 and UBP13-mediated deubiquitination. Autophosphorylated. As to expression, expressed in roots.

Its subcellular location is the cell membrane. The catalysed reaction is L-seryl-[protein] + ATP = O-phospho-L-seryl-[protein] + ADP + H(+). It carries out the reaction L-threonyl-[protein] + ATP = O-phospho-L-threonyl-[protein] + ADP + H(+). Functionally, together with RGI2, RGI3, RGI4 and RGI5, acts as a receptor of RGF peptides (e.g. RGF1, GLV5/CLEL1/RGF2, GLV7/CLEL3/RGF3, GLV3/RGF4, GLV10/CLEL7/RGF5 and RGF10/CLELN), peptide hormones which maintain the postembryonic root stem cell niche by regulating the expression levels and patterns of the transcription factor PLETHORA (PLT, e.g. PLT1 and PLT2). Links RGF peptides signal with their downstream components. The polypeptide is LRR receptor-like serine/threonine-protein kinase RGI1 (Arabidopsis thaliana (Mouse-ear cress)).